We begin with the raw amino-acid sequence, 1012 residues long: Cellulose synthase-like protein D5 (1012 aa).

The tract at residues 1 to 81 (MSVDYANYTV…ARVPAPSSNK (81 aa)) is disordered. Over residues 20–37 (PSGGAPPAAPSAGGARPG) the composition is skewed to low complexity. Basic and acidic residues predominate over residues 57-69 (GGGDDGAKMDRRL). The next 2 membrane-spanning stretches (helical) occupy residues 150 to 170 (ILSP…LFLV) and 180 to 200 (ALWL…SWLL). Residue aspartate 280 is part of the active site. A disordered region spans residues 597–620 (PRQGSEAMPGAGGGRSGGGSVGGD). Residues 606–618 (GAGGGRSGGGSVG) are compositionally biased toward gly residues. Aspartate 717 is a catalytic residue. Transmembrane regions (helical) follow at residues 799 to 819 (LFLI…QFIV), 825 to 845 (TFLS…LLEV), 871 to 891 (LAAV…SFTL), 914 to 934 (SLFI…VVGV), 948 to 968 (LLGG…FAKG), and 978 to 998 (TIVY…WITI).

The protein belongs to the glycosyltransferase 2 family. Plant cellulose synthase-like D subfamily.

Its subcellular location is the golgi apparatus membrane. In terms of biological role, thought to be a Golgi-localized beta-glycan synthase that polymerize the backbones of noncellulosic polysaccharides (hemicelluloses) of plant cell wall. The protein is Cellulose synthase-like protein D5 (CSLD5) of Oryza sativa subsp. japonica (Rice).